We begin with the raw amino-acid sequence, 471 residues long: Putative multidrug resistance protein MdtD (471 aa).

Transmembrane regions (helical) follow at residues 12–32 (LWIVAFGFFMQSLDTTIVNTA), 49–69 (MVVVSYVLTVAVMLPASGWLA), 77–97 (IFFTAIVLFTLGSLFCAWSST), 102–124 (VLARVLQGVGGAMMVPVGRLTVM), 138–158 (FVTLPGQVGPLLGPALGGILV), 165–185 (WIFLINIPVGIVGAIATLMLM), 197–217 (LSGFLLLAVGMAVLTMALDGS), 222–242 (LSPLSLGALVLCGILAIALYL), 263–283 (FSLGLSGSFAGRVGSGMLPFM), 286–306 (VFLQIGLGFSPFHAGLMMIPM), 342–362 (LLFMSVAMLGWYYALPFVLFL), 396–416 (MIMQLSMSIGVTIAGLLLGMF), and 431–451 (VFMYTWLCMALIIALPALIFA).

This sequence belongs to the major facilitator superfamily. TCR/Tet family.

It localises to the cell inner membrane. In Citrobacter koseri (strain ATCC BAA-895 / CDC 4225-83 / SGSC4696), this protein is Putative multidrug resistance protein MdtD.